The primary structure comprises 164 residues: Lipoprotein signal peptidase (164 aa).

4 helical membrane-spanning segments follow: residues 8-28, 39-59, 64-84, and 91-111; these read IVAAVAALIADQASKLWLLFV, VTPFFDLVLAWNTGISYGWFQ, VGATILLAIKAGAVVLLAIWM, and LATIGLGLIIGGAIGNAIDRF. Active-site residues include D118 and D140. Residues 131-151 form a helical membrane-spanning segment; that stretch reads YSWYVFNLADVAIVAGVIALL.

It belongs to the peptidase A8 family.

It is found in the cell inner membrane. It catalyses the reaction Release of signal peptides from bacterial membrane prolipoproteins. Hydrolyzes -Xaa-Yaa-Zaa-|-(S,diacylglyceryl)Cys-, in which Xaa is hydrophobic (preferably Leu), and Yaa (Ala or Ser) and Zaa (Gly or Ala) have small, neutral side chains.. It functions in the pathway protein modification; lipoprotein biosynthesis (signal peptide cleavage). In terms of biological role, this protein specifically catalyzes the removal of signal peptides from prolipoproteins. In Nitrobacter hamburgensis (strain DSM 10229 / NCIMB 13809 / X14), this protein is Lipoprotein signal peptidase.